We begin with the raw amino-acid sequence, 417 residues long: UPF0761 membrane protein Daci_4966 (417 aa).

6 helical membrane passes run 49–69 (VLALVPFFTVALALFTAFPIF), 106–126 (QLGMAGFSILVITAVALILTI), 146–166 (VLIYWAAITLGPLVLGLSLVL), 187–207 (FIFDSIEYLALAAGMAGLYHY), 235–255 (ALGLYLASVPTYSVIYGTFAT), and 256–276 (LPILLIWIYMAWIIVLLGAVV).

This sequence belongs to the UPF0761 family.

Its subcellular location is the cell inner membrane. The sequence is that of UPF0761 membrane protein Daci_4966 from Delftia acidovorans (strain DSM 14801 / SPH-1).